The primary structure comprises 210 residues: Troponin I, cardiac muscle (210 aa).

Positions 1–43 are disordered; sequence MADGSSDAAREPRPAPAPIRRRSSNYRAYATEPHAKKKSKISA. N-acetylalanine is present on Ala2. Phosphoserine occurs at positions 5 and 6. Ser23 and Ser24 each carry phosphoserine; by PKA and PKD/PRKD1. Tyr26 is subject to Phosphotyrosine. Residue Thr31 is modified to Phosphothreonine; by STK4/MST1. An involved in binding TNC region spans residues 32 to 79; it reads EPHAKKKSKISASRKLQLKTLLLQIAKQELEREAEERRGEKGRALSTR. 2 positions are modified to phosphoserine; by PKC/PRKCE: Ser42 and Ser44. Residue Thr51 is modified to Phosphothreonine; by STK4/MST1. Ser77 carries the phosphoserine modification. Position 78 is a phosphothreonine (Thr78). Phosphothreonine; by STK4/MST1 is present on residues Thr129 and Thr143. Residues 129-149 form an involved in binding TNC and actin region; that stretch reads TQKIFDLRGKFKRPTLRRVRI. Ser150 carries the phosphoserine; by PAK3 modification. Ser166 carries the post-translational modification Phosphoserine. Position 181 is a phosphothreonine (Thr181). Phosphoserine is present on Ser199.

Belongs to the troponin I family. Binds to actin and tropomyosin. Interacts with TRIM63. Interacts with STK4/MST1. Post-translationally, phosphorylated at Ser-42 and Ser-44 by PRKCE; phosphorylation increases myocardium contractile dysfunction. Phosphorylated at Ser-23 and Ser-24 by PRKD1; phosphorylation reduces myofilament calcium sensitivity. Phosphorylated preferentially at Thr-31. Phosphorylation by STK4/MST1 alters its binding affinity to TNNC1 (cardiac Tn-C) and TNNT2 (cardiac Tn-T).

Its function is as follows. Troponin I is the inhibitory subunit of troponin, the thin filament regulatory complex which confers calcium-sensitivity to striated muscle actomyosin ATPase activity. This chain is Troponin I, cardiac muscle (TNNI3), found in Homo sapiens (Human).